The sequence spans 297 residues: Putative heme-binding peroxidase (297 aa).

His-74 acts as the Proton acceptor in catalysis. His-198 contacts heme b. The Tryptophan radical intermediate role is filled by Trp-214.

Belongs to the peroxidase family. Cytochrome c peroxidase subfamily. It depends on heme b as a cofactor.

Destroys radicals which are normally produced within the cells and which are toxic to biological systems. This chain is Putative heme-binding peroxidase, found in Yarrowia lipolytica (strain CLIB 122 / E 150) (Yeast).